The primary structure comprises 706 residues: Fatty acid oxidation complex subunit alpha (706 aa).

The enoyl-CoA hydratase stretch occupies residues 1–188; it reads MEKTFNLTRR…KMGLVNDVVP (188 aa). Positions 308-706 are 3-hydroxyacyl-CoA dehydrogenase; the sequence is RKVKKAVILG…TMARENVSFF (399 aa).

In the N-terminal section; belongs to the enoyl-CoA hydratase/isomerase family. It in the central section; belongs to the 3-hydroxyacyl-CoA dehydrogenase family. As to quaternary structure, heterotetramer of two alpha chains (FadJ) and two beta chains (FadI).

It localises to the cytoplasm. The catalysed reaction is a (3S)-3-hydroxyacyl-CoA = a (2E)-enoyl-CoA + H2O. It catalyses the reaction a 4-saturated-(3S)-3-hydroxyacyl-CoA = a (3E)-enoyl-CoA + H2O. It carries out the reaction a (3S)-3-hydroxyacyl-CoA + NAD(+) = a 3-oxoacyl-CoA + NADH + H(+). The enzyme catalyses (3S)-3-hydroxybutanoyl-CoA = (3R)-3-hydroxybutanoyl-CoA. Its pathway is lipid metabolism; fatty acid beta-oxidation. Its function is as follows. Catalyzes the formation of a hydroxyacyl-CoA by addition of water on enoyl-CoA. Also exhibits 3-hydroxyacyl-CoA epimerase and 3-hydroxyacyl-CoA dehydrogenase activities. This is Fatty acid oxidation complex subunit alpha from Shewanella putrefaciens (strain CN-32 / ATCC BAA-453).